We begin with the raw amino-acid sequence, 227 residues long: Cytochrome c oxidase subunit 2 (227 aa).

The Mitochondrial intermembrane segment spans residues 1–14 (MAYPFQLGLQDATS). The chain crosses the membrane as a helical span at residues 15–45 (PIMEELLHFHDHTLMIVFLISSLVLYIISLM). Residues 46–59 (LTTKLTHTSTMDAQ) lie on the Mitochondrial matrix side of the membrane. A helical transmembrane segment spans residues 60–87 (EVETVWTILPAIILILIALLSLRILYMM). Residues 88–227 (DEINNPFLTM…YFETWSALMV (140 aa)) lie on the Mitochondrial intermembrane side of the membrane. The Cu cation site is built by histidine 161, cysteine 196, glutamate 198, cysteine 200, histidine 204, and methionine 207. A Mg(2+)-binding site is contributed by glutamate 198. Tyrosine 218 carries the phosphotyrosine modification.

It belongs to the cytochrome c oxidase subunit 2 family. Component of the cytochrome c oxidase (complex IV, CIV), a multisubunit enzyme composed of 14 subunits. The complex is composed of a catalytic core of 3 subunits MT-CO1, MT-CO2 and MT-CO3, encoded in the mitochondrial DNA, and 11 supernumerary subunits COX4I, COX5A, COX5B, COX6A, COX6B, COX6C, COX7A, COX7B, COX7C, COX8 and NDUFA4, which are encoded in the nuclear genome. The complex exists as a monomer or a dimer and forms supercomplexes (SCs) in the inner mitochondrial membrane with NADH-ubiquinone oxidoreductase (complex I, CI) and ubiquinol-cytochrome c oxidoreductase (cytochrome b-c1 complex, complex III, CIII), resulting in different assemblies (supercomplex SCI(1)III(2)IV(1) and megacomplex MCI(2)III(2)IV(2)). Found in a complex with TMEM177, COA6, COX18, COX20, SCO1 and SCO2. Interacts with TMEM177 in a COX20-dependent manner. Interacts with COX20. Interacts with COX16. Cu cation is required as a cofactor.

Its subcellular location is the mitochondrion inner membrane. The catalysed reaction is 4 Fe(II)-[cytochrome c] + O2 + 8 H(+)(in) = 4 Fe(III)-[cytochrome c] + 2 H2O + 4 H(+)(out). In terms of biological role, component of the cytochrome c oxidase, the last enzyme in the mitochondrial electron transport chain which drives oxidative phosphorylation. The respiratory chain contains 3 multisubunit complexes succinate dehydrogenase (complex II, CII), ubiquinol-cytochrome c oxidoreductase (cytochrome b-c1 complex, complex III, CIII) and cytochrome c oxidase (complex IV, CIV), that cooperate to transfer electrons derived from NADH and succinate to molecular oxygen, creating an electrochemical gradient over the inner membrane that drives transmembrane transport and the ATP synthase. Cytochrome c oxidase is the component of the respiratory chain that catalyzes the reduction of oxygen to water. Electrons originating from reduced cytochrome c in the intermembrane space (IMS) are transferred via the dinuclear copper A center (CU(A)) of subunit 2 and heme A of subunit 1 to the active site in subunit 1, a binuclear center (BNC) formed by heme A3 and copper B (CU(B)). The BNC reduces molecular oxygen to 2 water molecules using 4 electrons from cytochrome c in the IMS and 4 protons from the mitochondrial matrix. This is Cytochrome c oxidase subunit 2 (MT-CO2) from Nyctereutes procyonoides (Raccoon dog).